Consider the following 639-residue polypeptide: Immunoglobulin-like domain-containing receptor 2 (639 aa).

Positions 1 to 20 (MDRVLLRWISLFWLTAMVEG) are cleaved as a signal peptide. The Ig-like V-type domain maps to 21–162 (LQVTVPDKKK…LEGKNEDSVE (142 aa)). The Lumenal segment spans residues 21 to 186 (LQVTVPDKKK…PSFAVEIMPE (166 aa)). An intrachain disulfide couples C42 to C145. The chain crosses the membrane as a helical span at residues 187-207 (WVFVGLVLLGVFLFFVLVGIC). Over 208–639 (WCQCCPHSCC…DFPTRMSLVV (432 aa)) the chain is Cytoplasmic. 3 disordered regions span residues 273–295 (LMDK…HSVR), 374–415 (WSGV…MLSR), and 437–639 (YGQR…SLVV). Composition is skewed to basic and acidic residues over residues 393-414 (YNKE…EMLS) and 442-464 (RRAD…ESRA). A Phosphoserine modification is found at S473. Basic and acidic residues predominate over residues 483–493 (RSREPLTDADR). R544 is modified (omega-N-methylarginine). S579 carries the phosphoserine modification. Positions 606–617 (RGRDLPYHSNSE) are enriched in basic and acidic residues.

This sequence belongs to the immunoglobulin superfamily. LISCH7 family. As to quaternary structure, interacts with MARVELD2 and OCLN. Interacts with P4HB AND HSPA5; the interaction with HSPA5 stabilizes ILDR2 expression. Interacts (via C-terminus) with TRA2A, TRA2B and SRSF1. As to expression, expressed in testis, brain, pituitary, colon, heart, nerves, prostate, esophagus, lung liver and small intestine. Highly expressed in macrophages, also expressed in monocytes and at low levels in NK and NKT cells (at protein level).

It localises to the endoplasmic reticulum membrane. It is found in the cell junction. The protein localises to the tight junction. The protein resides in the nucleus. May be involved in ER stress pathways with effects on lipid homeostasis and insulin secretion. With ILDR1 and LSR, involved in the maintain of the epithelial barrier function through the recruitment of MARVELD2/tricellulin to tricellular tight junctions. Also functions as a B7-like protein family member expressed on immune cells and inflamed tissue and with T-cell inhibitory activity. In the inner ear, may regulate alternative pre-mRNA splicing via binding to TRA2A, TRA2B and SRSF1. This Homo sapiens (Human) protein is Immunoglobulin-like domain-containing receptor 2.